Consider the following 67-residue polypeptide: uncharacterized protein (67 aa).

This is an uncharacterized protein from Archaeoglobus fulgidus (strain ATCC 49558 / DSM 4304 / JCM 9628 / NBRC 100126 / VC-16).